Consider the following 90-residue polypeptide: Large ribosomal subunit protein bL31B (90 aa).

It belongs to the bacterial ribosomal protein bL31 family. Type B subfamily. Part of the 50S ribosomal subunit.

The chain is Large ribosomal subunit protein bL31B from Pseudomonas fluorescens (strain SBW25).